A 305-amino-acid polypeptide reads, in one-letter code: Polyamine aminopropyltransferase 2 (305 aa).

Residues 7-242 enclose the PABS domain; it reads WRFVAEWTSE…GLWGFVAASD (236 aa). Gln36 lines the S-methyl-5'-thioadenosine pocket. 2 residues coordinate spermidine: His67 and Glu91. S-methyl-5'-thioadenosine-binding positions include Asp111 and 143–144; that span reads DG. The active-site Proton acceptor is Asp161. Pro170 lines the S-methyl-5'-thioadenosine pocket.

The protein belongs to the spermidine/spermine synthase family. Homodimer or homotetramer.

It localises to the cytoplasm. The enzyme catalyses S-adenosyl 3-(methylsulfanyl)propylamine + propane-1,3-diamine = norspermidine + S-methyl-5'-thioadenosine + H(+). Involved in the biosynthesis of polyamines which are thought to support the growth of thermophilic microorganisms under high-temperature conditions. It seems that long-chain and branched-chain of polyamines effectively stabilize DNA and RNA, respectively. Catalyzes the irreversible transfer of a propylamine group from the amino donor S-adenosylmethioninamine (decarboxy-AdoMet) to 1,3-diaminopropane to yield sym-norspermidine (bis(3-aminopropyl)amine). It can also synthesize thermospermine from spermidine with a very low activity. The sequence is that of Polyamine aminopropyltransferase 2 from Hyperthermus butylicus (strain DSM 5456 / JCM 9403 / PLM1-5).